The following is a 327-amino-acid chain: Ornithine carbamoyltransferase, mitochondrial (327 aa).

Carbamoyl phosphate contacts are provided by residues 63–66 (STRT), Arg114, His141, and Gln144. L-ornithine-binding residues include Asn172, Asp236, Ser240, and Met241. Cys276 functions as the Proton acceptor in the catalytic mechanism. Residues 276–277 (CL) and Arg303 contribute to the carbamoyl phosphate site.

It belongs to the aspartate/ornithine carbamoyltransferase superfamily. OTCase family. As to quaternary structure, interacts with trx2.

The protein resides in the mitochondrion matrix. The enzyme catalyses carbamoyl phosphate + L-ornithine = L-citrulline + phosphate + H(+). The protein operates within amino-acid biosynthesis; L-arginine biosynthesis; L-arginine from L-ornithine and carbamoyl phosphate: step 1/3. In terms of biological role, ornithine carbamoyltransferase involved in the synthesis of arginine from glutamate via ornithine and the urea cycle. The polypeptide is Ornithine carbamoyltransferase, mitochondrial (arg3) (Schizosaccharomyces pombe (strain 972 / ATCC 24843) (Fission yeast)).